A 390-amino-acid polypeptide reads, in one-letter code: UPF0229 protein OB2647 (390 aa).

The tract at residues 99–121 (NASQQGQQGQGNGKKAGDQPGTD) is disordered.

This sequence belongs to the UPF0229 family.

This Oceanobacillus iheyensis (strain DSM 14371 / CIP 107618 / JCM 11309 / KCTC 3954 / HTE831) protein is UPF0229 protein OB2647.